A 482-amino-acid polypeptide reads, in one-letter code: UDP-N-acetylmuramate--L-alanine ligase (482 aa).

115–121 (GTHGKTT) provides a ligand contact to ATP.

It belongs to the MurCDEF family.

Its subcellular location is the cytoplasm. It catalyses the reaction UDP-N-acetyl-alpha-D-muramate + L-alanine + ATP = UDP-N-acetyl-alpha-D-muramoyl-L-alanine + ADP + phosphate + H(+). It functions in the pathway cell wall biogenesis; peptidoglycan biosynthesis. Its function is as follows. Cell wall formation. In Rhodospirillum centenum (strain ATCC 51521 / SW), this protein is UDP-N-acetylmuramate--L-alanine ligase.